The following is a 208-amino-acid chain: MSAILKLLEYCLGRLFYRRRGYDAQLFYKSAAFAKHSSPTIPITSPDCGKTGAILTTEYSKFGSGKIPQFTWPAAAPDVKEFLMLCEDPDAPMGHPNVHGIYCFIPPTVTSFGPTDLELIKEVDGVKVLESGYRVGKNRRNVVYIAPRPPLGHGPHRYLFELVALSEKLDPEGISKVPDKGEIEKAIEGKVASWGLWEATYESTWDRK.

The protein belongs to the tstB family.

Phosphatidylethanolamine-binding protein; part of the gene cluster that mediates the biosynthesis of the antihypercholesterolemic agents phomoidrides which are dimeric anhydrides. Within the pathway, phiB is not essential for dimerization and its function has still to be determined. The pathway begins with the highly reducing polyketide synthase phiA that catalyzes the formation of a C12-fatty acyl-ACP, starting from one acetate and 5 malonate units. The hydrolase phiM is involved in the release of the C12-fatty acyl chain from phiA. The alkylcitrate synthase (ACS) phiJ and the alkylcitrate dehydratase (ACDH) phiI then give rise to decarboxylated monomeric anhydrides by coupling the C12-fatty acyl chain with oxalacetic acid. The cyclase phiC is responsible for the dimerization of the monomeric anhydrides which leads to the production of prephomoidride that contains the characteristic bicyclo[4.3.1]deca-1,6-diene system of phomoidrides. Iterative oxidation catalyzed by the alpha-ketoglutarate-dependent dioxygenase phiK produced then phomoidride A. Finally, the methyltransferase phiE converts phomoidride A to phomoidride B via an acetalization reaction. The phosphatidylethanolamine-binding protein phiB and phiN are not essential for dimerization and their functions have still to be determined. In Fungal sp. (strain ATCC 74256), this protein is Phomoidride biosynthesis cluster protein B.